The chain runs to 286 residues: Aminoglycoside N(3)-acetyltransferase III (286 aa).

It belongs to the antibiotic N-acetyltransferase family.

It carries out the reaction a 2-deoxystreptamine antibiotic + acetyl-CoA = an N(3)-acetyl-2-deoxystreptamine antibiotic + CoA + H(+). In terms of biological role, resistance to antibiotics containing the 2-deoxy-streptamine ring including gentamicin, kanamycin, tobramycin, neomycin and apramycin. The polypeptide is Aminoglycoside N(3)-acetyltransferase III (aacC3) (Salmonella sp).